A 329-amino-acid chain; its full sequence is Palmitoyltransferase pfa3 (329 aa).

Transmembrane regions (helical) follow at residues 14–34, 49–69, 141–161, 177–197, and 243–263; these read VLVILAKYCMQIIALSLMSGV, VGIIILFLYIMIVTCYVLTNL, FFFLECFYLNLYSICVLYSTF, AIYLVFWGFLFAFAVGMSIVM, and IMGKSPFLWLLPFPNSIGEGV. The DHHC domain occupies 97 to 147; it reads RFCEKCQEYKCDRSHHCSQCNKCILRMDHHCMWFKNCVGFRNHKFFFLECF.

This sequence belongs to the DHHC palmitoyltransferase family. PFA3 subfamily. In terms of processing, autopalmitoylated.

It localises to the vacuole membrane. Its subcellular location is the golgi apparatus membrane. It carries out the reaction L-cysteinyl-[protein] + hexadecanoyl-CoA = S-hexadecanoyl-L-cysteinyl-[protein] + CoA. Its function is as follows. Palmitoyltransferase specific for VAC8. Palmitoylates VAC8 at one or more of its N-terminal cysteine residues, which is required for its proper membrane localization. The protein is Palmitoyltransferase pfa3 (pfa3) of Schizosaccharomyces pombe (strain 972 / ATCC 24843) (Fission yeast).